We begin with the raw amino-acid sequence, 307 residues long: Oxygen-dependent coproporphyrinogen-III oxidase (307 aa).

S99 contacts substrate. 2 residues coordinate a divalent metal cation: H103 and H113. H113 (proton donor) is an active-site residue. Residue 115-117 (NVR) coordinates substrate. Residues H152 and H182 each coordinate a divalent metal cation. The important for dimerization stretch occupies residues 247–282 (YVEFNLVFDRGTLFGLQSGGRTESILMSMPPVANWR). Position 265-267 (265-267 (GGR)) interacts with substrate.

Belongs to the aerobic coproporphyrinogen-III oxidase family. As to quaternary structure, homodimer. The cofactor is a divalent metal cation.

It is found in the cytoplasm. The enzyme catalyses coproporphyrinogen III + O2 + 2 H(+) = protoporphyrinogen IX + 2 CO2 + 2 H2O. It functions in the pathway porphyrin-containing compound metabolism; protoporphyrin-IX biosynthesis; protoporphyrinogen-IX from coproporphyrinogen-III (O2 route): step 1/1. Involved in the heme biosynthesis. Catalyzes the aerobic oxidative decarboxylation of propionate groups of rings A and B of coproporphyrinogen-III to yield the vinyl groups in protoporphyrinogen-IX. The chain is Oxygen-dependent coproporphyrinogen-III oxidase from Burkholderia orbicola (strain MC0-3).